Reading from the N-terminus, the 264-residue chain is 3-methyl-2-oxobutanoate hydroxymethyltransferase (264 aa).

Asp-45 and Asp-84 together coordinate Mg(2+). Residues 45-46 (DS), Asp-84, and Lys-112 each bind 3-methyl-2-oxobutanoate. Glu-114 lines the Mg(2+) pocket. The active-site Proton acceptor is Glu-181.

This sequence belongs to the PanB family. As to quaternary structure, homodecamer; pentamer of dimers. Requires Mg(2+) as cofactor.

The protein resides in the cytoplasm. The catalysed reaction is 3-methyl-2-oxobutanoate + (6R)-5,10-methylene-5,6,7,8-tetrahydrofolate + H2O = 2-dehydropantoate + (6S)-5,6,7,8-tetrahydrofolate. The protein operates within cofactor biosynthesis; (R)-pantothenate biosynthesis; (R)-pantoate from 3-methyl-2-oxobutanoate: step 1/2. In terms of biological role, catalyzes the reversible reaction in which hydroxymethyl group from 5,10-methylenetetrahydrofolate is transferred onto alpha-ketoisovalerate to form ketopantoate. The protein is 3-methyl-2-oxobutanoate hydroxymethyltransferase of Escherichia coli O7:K1 (strain IAI39 / ExPEC).